A 298-amino-acid chain; its full sequence is Inosose dehydratase (298 aa).

Belongs to the IolE/MocC family. The cofactor is glutathione. Requires Co(2+) as cofactor. Mn(2+) serves as cofactor.

The enzyme catalyses scyllo-inosose = 3D-3,5/4-trihydroxycyclohexane-1,2-dione + H2O. Its pathway is polyol metabolism; myo-inositol degradation into acetyl-CoA; acetyl-CoA from myo-inositol: step 2/7. In terms of biological role, catalyzes the dehydration of inosose (2-keto-myo-inositol, 2KMI or 2,4,6/3,5-pentahydroxycyclohexanone) to 3D-(3,5/4)-trihydroxycyclohexane-1,2-dione (D-2,3-diketo-4-deoxy-epi-inositol). This is Inosose dehydratase from Clostridium tetani (strain Massachusetts / E88).